We begin with the raw amino-acid sequence, 396 residues long: Phosphoglycerate kinase (396 aa).

Substrate-binding positions include 21–23 (DLN), Arg36, 59–62 (HLGR), Arg113, and Arg146. ATP is bound by residues Lys197, Glu319, and 345–348 (GGDT).

Belongs to the phosphoglycerate kinase family. As to quaternary structure, monomer.

Its subcellular location is the cytoplasm. The catalysed reaction is (2R)-3-phosphoglycerate + ATP = (2R)-3-phospho-glyceroyl phosphate + ADP. The protein operates within carbohydrate degradation; glycolysis; pyruvate from D-glyceraldehyde 3-phosphate: step 2/5. In Legionella pneumophila (strain Paris), this protein is Phosphoglycerate kinase.